The chain runs to 1167 residues: Cytotoxicity-associated immunodominant antigen (1167 aa).

Residues 632–651 form a disordered region; it reads VAKNLESKSGNKNKMEAKSQ.

In terms of biological role, may be necessary for the transcription, folding, export, or function of the cytotoxin. In Helicobacter pylori (strain J99 / ATCC 700824) (Campylobacter pylori J99), this protein is Cytotoxicity-associated immunodominant antigen (cagA).